A 537-amino-acid chain; its full sequence is MFKREEIIEMANKDFEKAWIETKDLIKAKKVNESYPRIKPAFGKTHPVNDTIENLRQAYLRMGFEEYINPVIVDERDIYKQFGPEAMAVLDRCFYLAGLPRPDVGLSDEKISQIEKLGIKVSEHKESLQKILHGYKKGTLDGDDLVLEISNALEISSEMGLKILEEVFPEFKDLTAVSSKLTLRSHMTSGWFLTVSDLMNKKPLPFKLFSIDRCFRREQKEDKSHLMTYHSASCAIAGEGVDINDGKAIAEGLLSQFGFTNFKFIPDEKKSKYYTPETQTEVYAYHPKLKEWLEVATFGVYSPVALSKYGIDVPVMNLGLGVERLAMISGNFADVREMVYPQFYEHKLSDRAVASMVKLDKVPVMDEIYDLTKELIDSCVKNKDLKSPCELTIEKTFSFGKTKKNVKINIFEKEEGKNLLGPSILNEIYVYDGNVIGIPESFDGVKEEFKDFLEKGKAEGVPTGIRYIDALCFKITSKLEEAFVSNTTEFKVKVPIVRSLSDINLKIDDIALKQIMSKTKVIDVRGPVFLNVEVKIE.

Substrate is bound by residues His186–Thr188, Ser231–Ser233, Tyr273–Tyr274, and Asn317.

The protein belongs to the class-II aminoacyl-tRNA synthetase family. O-phosphoseryl-tRNA(Cys) synthetase subfamily. As to quaternary structure, homotetramer. Interacts with SepCysS.

It carries out the reaction tRNA(Cys) + O-phospho-L-serine + ATP = O-phospho-L-seryl-tRNA(Cys) + AMP + diphosphate. Its function is as follows. Catalyzes the attachment of O-phosphoserine (Sep) to tRNA(Cys). The chain is O-phosphoserine--tRNA(Cys) ligase from Methanococcus maripaludis (strain C5 / ATCC BAA-1333).